We begin with the raw amino-acid sequence, 847 residues long: Bifunctional lysine-specific demethylase and histidyl-hydroxylase NO66 (847 aa).

Residues 1-24 are compositionally biased toward polar residues; that stretch reads MEKVTNSAAAKPQGNNKKQESAYN. 3 disordered regions span residues 1 to 45, 203 to 223, and 254 to 320; these read MEKV…SDLL, AEAD…KESV, and AEKE…ERKQ. Basic and acidic residues predominate over residues 203-214; it reads AEADAKNNDTKK. Residues 268–278 are compositionally biased toward low complexity; that stretch reads STSSKEAAAAK. Basic and acidic residues predominate over residues 279–288; it reads TADHERRLLA. The span at 304 to 314 shows a compositional bias: polar residues; sequence AMESVATQGAS. Ser-323 carries the post-translational modification Phosphoserine. Thr-329 is modified (phosphothreonine). Ser-330 carries the post-translational modification Phosphoserine. Residues 377–401 form a disordered region; that stretch reads KAPEEGNNNNDEKEMSTETSETHKT. Positions 386-401 are enriched in basic and acidic residues; that stretch reads NDEKEMSTETSETHKT. Residues 499–644 form the JmjC domain; the sequence is CSIRLLNPSA…NLLETLMPMV (146 aa). Positions 545, 547, and 610 each coordinate Fe cation.

It belongs to the ROX family. NO66 subfamily. Fe(2+) serves as cofactor.

It is found in the nucleus. It catalyses the reaction N(6),N(6)-dimethyl-L-lysyl(36)-[histone H3] + 2 2-oxoglutarate + 2 O2 = L-lysyl(36)-[histone H3] + 2 formaldehyde + 2 succinate + 2 CO2. In terms of biological role, oxygenase that can act as both a histone lysine demethylase and a ribosomal histidine hydroxylase. Specifically demethylates 'Lys-4' (H3K4me) and 'Lys-36' (H3K36me) of histone H3, thereby playing a central role in histone code. This is Bifunctional lysine-specific demethylase and histidyl-hydroxylase NO66 from Drosophila simulans (Fruit fly).